The chain runs to 1032 residues: Toll-like receptor 9 (1032 aa).

An N-terminal signal peptide occupies residues 1 to 25 (MVLRRRTLHPLSLLVQAAVLAETLA). Residues 26 to 818 (LGTLPAFLPC…LCLDEVLSWD (793 aa)) lie on the Extracellular side of the membrane. The cysteines at positions 35 and 45 are disulfide-linked. 47 to 51 (WLFLK) contacts DNA. 26 LRR repeats span residues 62-85 (CSNITRLSLISNRIHHLHNSDFVH), 87-110 (SNLRQLNLKWNCPPTGLSPLHFSC), 122-147 (MRTLEELNLSYNGITTVPRLPSSLVN), 150-166 (LSHTNILVLDANSLAGL), 167-190 (YSLRVLFMDGNCYYKNPCTGAVKV), 198-221 (LSNLTHLSLKYNNLTKVPRQLPPS), 223-242 (EYLLVSYNLIVKLGPEDLAN), 243-268 (LTSLRVLDVGGNCRRCDHAPNPCIEC), 283-306 (LSHLEGLVLKDSSLHTLNSSWFQG), 308-332 (VNLSVLDLSENFLYESITHTNAFQN), 333-356 (LTRLRKLNLSFNYRKKVSFARLHL), 363-386 (LVSLQELNMNGIFFRLLNKYTLRW), 390-413 (LPKLHTLHLQMNFINQAQLSIFGT), 415-440 (RALRFVDLSDNRISGPSTLSEATPEE), 471-495 (CKNFKFTMDLSRNNLVTIKPEMFVN), 497-520 (SRLQCLSLSHNSIAQAVNGSQFLP), 521-544 (LTNLQVLDLSHNKLDLYHWKSFSE), 546-573 (PQLQALDLSYNSQPFSMKGIGHNFSFVT), 575-599 (LSMLQSLSLAHNDIHTRVSSHLNSN), 601-623 (VRFLDFSGNGMGRMWDEGGLYLH), 628-651 (LSGLLKLDLSQNNLHILRPQNLDN), 653-676 (PKSLKLLSLRDNYLSFFNWTSLSF), 677-700 (LPNLEVLDLAGNQLKALTNGTLPN), 702-724 (TLLQKLDVSSNSIVSVVPAFFAL), 725-748 (AVELKEVNLSHNILKTVDRSWFGP), and 750-773 (VMNLTVLDVRSNPLHCACGAAFVD). Asn64 is a glycosylation site (N-linked (GlcNAc...) asparagine). DNA is bound by residues 72–77 (SNRIHH) and 95–109 (KWNCPPTGLSPLHFS). Cys98 and Cys110 form a disulfide bridge. A glycan (N-linked (GlcNAc...) asparagine) is linked at Asn129. Tyr132 is a DNA binding site. N-linked (GlcNAc...) asparagine glycosylation is present at Asn147. A disulfide bridge connects residues Cys178 and Cys184. DNA is bound at residue 179–181 (YYK). The N-linked (GlcNAc...) asparagine glycan is linked to Asn200. Residue Tyr208 coordinates DNA. Asn210 and Asn242 each carry an N-linked (GlcNAc...) asparagine glycan. 2 disulfide bridges follow: Cys255-Cys268 and Cys258-Cys265. 2 S-palmitoyl cysteine lipidation sites follow: Cys258 and Cys265. Asn300, Asn309, Asn332, and Asn340 each carry an N-linked (GlcNAc...) asparagine glycan. The segment at 430–462 (PSTLSEATPEEADDAEQEELLSADPHPAPLSTP) is disordered. The span at 437–450 (TPEEADDAEQEELL) shows a compositional bias: acidic residues. A disulfide bridge connects residues Cys471 and Cys501. N-linked (GlcNAc...) asparagine glycosylation is found at Asn495 and Asn514. Residue Asn568 is glycosylated (N-linked (GlcNAc...) asparagine). N-linked (GlcNAc...) asparagine glycans are attached at residues Asn670, Asn695, and Asn700. Asn732 and Asn752 each carry an N-linked (GlcNAc...) asparagine glycan. 2 cysteine pairs are disulfide-bonded: Cys765/Cys791 and Cys767/Cys810. Residues 819–839 (CFGLSLLAVAVGMVVPILHHL) form a helical membrane-spanning segment. Residues 840-1032 (CGWDVWYCFH…QNFCRGPTAE (193 aa)) are Cytoplasmic-facing. The region spanning 868–1013 (LPYDAFVVFD…GFWAQLSTAL (146 aa)) is the TIR domain.

It belongs to the Toll-like receptor family. In terms of assembly, monomer and homodimer. Exists as a monomer in the absence of unmethylated cytidine-phosphate-guanosine (CpG) ligand. Proteolytic processing of an insertion loop (Z-loop) is required for homodimerization upon binding to the unmethylated CpG ligand leading to its activation. Interacts with MYD88 via their respective TIR domains. Interacts with BTK. Interacts (via transmembrane domain) with UNC93B1. Interacts with CD300LH; the interaction may promote full activation of TLR9-triggered innate responses. Interacts with CNPY3 and HSP90B1; this interaction is required for proper folding in the endoplasmic reticulum. Interacts with SMPDL3B. Interacts with CD82; this interaction is essential for TLR9-dependent myddosome formation in response to CpG stimulation. Post-translationally, activated by proteolytic cleavage of the flexible loop between repeats LRR14 and LRR15 within the ectodomain. Cleavage requires UNC93B1. Proteolytically processed by first removing the majority of the ectodomain by either asparagine endopeptidase (AEP) or a cathepsin followed by a trimming event that is solely cathepsin mediated and required for optimal receptor signaling. Palmitoylated by ZDHHC3 in the Golgi regulates TLR9 trafficking from the Golgi to endosomes. Depalmitoylation by PPT1 controls the release of TLR9 from UNC93B1 in endosomes. In terms of tissue distribution, expressed in the basolateral region of gastric epithelial cells with high levels detected in antrum and body mucosa (at protein level). Detected in spleen and stomach at higher levels in C57BL/6 mice than BALB/C.

It localises to the endoplasmic reticulum membrane. It is found in the endosome. The protein localises to the lysosome. Its subcellular location is the cytoplasmic vesicle. The protein resides in the phagosome. Functionally, key component of innate and adaptive immunity. TLRs (Toll-like receptors) control host immune response against pathogens through recognition of molecular patterns specific to microorganisms. TLR9 is a nucleotide-sensing TLR which is activated by unmethylated cytidine-phosphate-guanosine (CpG) dinucleotides. Acts via MYD88 and TRAF6, leading to NF-kappa-B activation, cytokine secretion and the inflammatory response. Plays a role in defense against systemic mouse cytomegalovirus infection. Controls lymphocyte response to Helicobacter infection. Upon CpG stimulation, induces B-cell proliferation, activation, survival and antibody production. The chain is Toll-like receptor 9 (Tlr9) from Mus musculus (Mouse).